Consider the following 183-residue polypeptide: uncharacterized protein (183 aa).

This is an uncharacterized protein from Treponema pallidum (strain Nichols).